Reading from the N-terminus, the 259-residue chain is Small ribosomal subunit protein eS4 (259 aa).

The region spanning 41-105 (LPLSVLLKER…TDQSFRILYD (65 aa)) is the S4 RNA-binding domain. Residue threonine 248 is modified to Phosphothreonine. Residue serine 258 is modified to Phosphoserine.

The protein belongs to the eukaryotic ribosomal protein eS4 family.

This chain is Small ribosomal subunit protein eS4, found in Tetrahymena thermophila.